We begin with the raw amino-acid sequence, 428 residues long: Divergent protein kinase domain 1A (428 aa).

Topologically, residues 1 to 27 (MARSLCPGAWLRKPYYLQARFSYVRMK) are cytoplasmic. A helical transmembrane segment spans residues 28–48 (YLFFSWLVVFVGSWIIYVQYS). Over 49–428 (TYTELCRGKD…WKKISYTNDS (380 aa)) the chain is Lumenal.

The protein belongs to the DIPK family. Post-translationally, among the many cysteines in the lumenal domain, most are probably involved in disulfide bonds.

It is found in the endoplasmic reticulum membrane. This is Divergent protein kinase domain 1A from Homo sapiens (Human).